Here is a 178-residue protein sequence, read N- to C-terminus: ATP-dependent protease subunit HslV (178 aa).

Thr7 is an active-site residue. Residues Gly162, Cys165, and Thr168 each coordinate Na(+).

This sequence belongs to the peptidase T1B family. HslV subfamily. As to quaternary structure, a double ring-shaped homohexamer of HslV is capped on each side by a ring-shaped HslU homohexamer. The assembly of the HslU/HslV complex is dependent on binding of ATP.

The protein localises to the cytoplasm. The catalysed reaction is ATP-dependent cleavage of peptide bonds with broad specificity.. Allosterically activated by HslU binding. Functionally, protease subunit of a proteasome-like degradation complex believed to be a general protein degrading machinery. This is ATP-dependent protease subunit HslV from Paraburkholderia phymatum (strain DSM 17167 / CIP 108236 / LMG 21445 / STM815) (Burkholderia phymatum).